A 546-amino-acid chain; its full sequence is MTAQQHLSRRRMLGMAAFGAAALAGGTTIAAPRAAAAAKSAADNGGYVPAVVIGTGYGAAVSALRLGEAGVQTLMLEMGQLWNQPGPDGNIFCGMLNPDKRSSWFKNRTEAPLGSFLWLDVVNRNIDPYAGVLDRVNYDQMSVYVGRGVGGGSLVNGGMAVEPKRSYFEEILPRVDSSEMYDRYFPRANSMLRVNHIDTKWFEDTEWYKFARVSREQAGKAGLGTVFVPNVYDFGYMQREAAGEVPKSALATEVIYGNNHGKQSLDKTYLAAALGTGKVTIQTLHQVKTIRQTKDGGYALTVEQKDTDGKLLATKEISCRYLFLGAGSLGSTELLVRARDTGTLPNLNSEVGAGWGPNGNIMTARANHMWNPTGAHQSSIPALGIDAWDNSDSSVFAEIAPMPAGLETWVSLYLAITKNPQRGTFVYDAATDRAKLNWTRDQNAPAVNAAKALFDRINKANGTIYRYDLFGTQLKAFADDFCYHPLGGCVLGKATDDYGRVAGYKNLYVTDGSLIPGSVGVNPFVTITALAERNVERIIKQDVTAS.

Positions 1–42 (MTAQQHLSRRRMLGMAAFGAAALAGGTTIAAPRAAAAAKSAA) form a signal peptide, tat-type signal. Residues Y57, G58, E77, G152, N156, G157, M159, and V287 each contribute to the FAD site. Catalysis depends on proton acceptor residues E398 and H484. FAD is bound by residues G512 and F524.

It belongs to the GMC oxidoreductase family. Monomer. The cofactor is FAD. Post-translationally, predicted to be exported by the Tat system. The position of the signal peptide cleavage has been experimentally proven.

The protein resides in the secreted. The catalysed reaction is cholesterol + O2 = cholest-5-en-3-one + H2O2. It catalyses the reaction cholest-5-en-3-one = cholest-4-en-3-one. Its pathway is steroid metabolism; cholesterol degradation. In terms of biological role, bifunctional enzyme that catalyzes the oxidation and isomerization of cholesterol to cholestenone (cholest-4-en-3-one), an initial step in the cholesterol degradation process. The cholesterol degradation pathway allows the bacterium to utilize cholesterol as its sole source of carbon and energy. The chain is Cholesterol oxidase from Streptomyces sp. (strain SA-COO).